The following is a 484-amino-acid chain: Coronin-1B (484 aa).

At Ser-2 the chain carries Phosphoserine. 5 WD repeats span residues 80 to 120 (GHTG…LTSP), 130 to 170 (GHTK…ELYR), 174 to 213 (LHPDLIYNVSWNHNGSLFCTACKDKSVRIIDPRRGTLVAE), 217 to 260 (AHEG…EPMA), and 265 to 305 (DSSN…PYIH). Residues 447 to 481 (KLEEVMHGLRALRVLVKEQGERISRLEEHLGRMEN) adopt a coiled-coil conformation.

The protein belongs to the WD repeat coronin family. Forms homooligomers, but does not form complexes with the other coronins. Interacts with Arp2/3 complex components, including ACTR2, ARPC1B and ARPC2. Binds actin. In terms of processing, phosphorylation on Ser-2 regulates the interaction with the Arp2/3 complex and cell motility in fibroblasts. Phosphorylation does not seem to affect subcellular location.

The protein resides in the cytoplasm. It is found in the cytoskeleton. It localises to the stress fiber. Regulates leading edge dynamics and cell motility in fibroblasts. May be involved in cytokinesis and signal transduction. The polypeptide is Coronin-1B (Coro1b) (Rattus norvegicus (Rat)).